A 1237-amino-acid polypeptide reads, in one-letter code: Rho guanine nucleotide exchange factor 10-like protein (1237 aa).

Disordered stretches follow at residues 1–117 and 132–203; these read MASS…SSRR and YDDV…QPKM. The span at 25 to 45 shows a compositional bias: acidic residues; it reads EAEDDPGEGFEFDDSDDDEDT. Ser39 bears the Phosphoserine mark. A phosphotyrosine mark is found at Tyr132 and Tyr153. 2 stretches are compositionally biased toward basic and acidic residues: residues 146-163 and 184-194; these read EAER…RAPQ and EEAKPEAEPTK. Ser241 carries the phosphoserine modification. The region spanning 276–463 is the DH domain; sequence VRRHILGSIV…ETLAEKLNEQ (188 aa). 2 disordered regions span residues 1091 to 1118 and 1142 to 1164; these read QEEA…PASH and PGPL…HSEE.

Interacts with RHOA, RHOB and RHOC.

The protein localises to the cytoplasm. Functionally, acts as a guanine nucleotide exchange factor (GEF) for RHOA, RHOB and RHOC. This is Rho guanine nucleotide exchange factor 10-like protein (ARHGEF10L) from Bos taurus (Bovine).